The following is a 213-amino-acid chain: High frequency lysogenization protein HflD homolog (213 aa).

The stretch at 79–126 (QGLNAELTRYTLSLMVLERKLSSAKGALDTLGNRINGLQRQLEHFDLQ) forms a coiled coil.

This sequence belongs to the HflD family.

Its subcellular location is the cytoplasm. It localises to the cell inner membrane. The protein is High frequency lysogenization protein HflD homolog of Shigella boydii serotype 18 (strain CDC 3083-94 / BS512).